The sequence spans 47 residues: Conotoxin reg3.11 (47 aa).

A propeptide spanning residues 1–31 (DQPVERHAENKRHLIPAVMRAMTMNADRRVQ) is cleaved from the precursor. Intrachain disulfides connect C32/C44, C33/C42, and C38/C45. Residues 46–47 (YH) constitute a propeptide that is removed on maturation.

Belongs to the conotoxin M superfamily. Expressed by the venom duct.

The protein resides in the secreted. This chain is Conotoxin reg3.11, found in Conus regius (Crown cone).